The primary structure comprises 246 residues: Polyhedrin (246 aa).

Belongs to the polyhedrin family.

Major component of the virus occlusion bodies, which are large proteinaceous structures (polyhedra), that protect the virus from the outside environment for extended periods until they are ingested by insect larvae. This Mamestra brassicae nuclear polyhedrosis virus (MbNPV) protein is Polyhedrin (PH).